The sequence spans 167 residues: uncharacterized protein (167 aa).

This is an uncharacterized protein from Pasteurella multocida (strain Pm70).